Here is a 122-residue protein sequence, read N- to C-terminus: Large ribosomal subunit protein uL14 (122 aa).

This sequence belongs to the universal ribosomal protein uL14 family. In terms of assembly, part of the 50S ribosomal subunit. Forms a cluster with proteins L3 and L19. In the 70S ribosome, L14 and L19 interact and together make contacts with the 16S rRNA in bridges B5 and B8.

In terms of biological role, binds to 23S rRNA. Forms part of two intersubunit bridges in the 70S ribosome. The polypeptide is Large ribosomal subunit protein uL14 (Pelodictyon phaeoclathratiforme (strain DSM 5477 / BU-1)).